The chain runs to 170 residues: Ribosome maturation factor RimM (170 aa).

One can recognise a PRC barrel domain in the interval 98–170 (PDEYYWVDLE…LIVVDWDPDF (73 aa)).

Belongs to the RimM family. As to quaternary structure, binds ribosomal protein uS19.

It is found in the cytoplasm. Its function is as follows. An accessory protein needed during the final step in the assembly of 30S ribosomal subunit, possibly for assembly of the head region. Essential for efficient processing of 16S rRNA. May be needed both before and after RbfA during the maturation of 16S rRNA. It has affinity for free ribosomal 30S subunits but not for 70S ribosomes. This is Ribosome maturation factor RimM from Xanthomonas campestris pv. campestris (strain 8004).